A 325-amino-acid chain; its full sequence is ATPase GET3 (325 aa).

34 to 41 contributes to the ATP binding site; the sequence is KGGVGKTT. The active site involves Asp-63. ATP contacts are provided by Glu-243 and Asn-270. Residues Cys-281 and Cys-284 each coordinate Zn(2+).

The protein belongs to the arsA ATPase family. As to quaternary structure, homodimer.

The protein resides in the cytoplasm. Its subcellular location is the endoplasmic reticulum. Its function is as follows. ATPase required for the post-translational delivery of tail-anchored (TA) proteins to the endoplasmic reticulum. Recognizes and selectively binds the transmembrane domain of TA proteins in the cytosol. This complex then targets to the endoplasmic reticulum by membrane-bound receptors, where the tail-anchored protein is released for insertion. This process is regulated by ATP binding and hydrolysis. ATP binding drives the homodimer towards the closed dimer state, facilitating recognition of newly synthesized TA membrane proteins. ATP hydrolysis is required for insertion. Subsequently, the homodimer reverts towards the open dimer state, lowering its affinity for the membrane-bound receptor, and returning it to the cytosol to initiate a new round of targeting. This chain is ATPase GET3, found in Coccidioides posadasii (strain C735) (Valley fever fungus).